The sequence spans 95 residues: Protein TRACHEARY ELEMENT DIFFERENTIATION-RELATED 6 (95 aa).

The Extracellular portion of the chain corresponds to 1–3 (MAT). The chain crosses the membrane as a helical span at residues 4–24 (IFIVFVSFGCVFVLGIAAFVL). The Cytoplasmic portion of the chain corresponds to 25-95 (CCLIKKWKCS…KLGTASTSKA (71 aa)).

Interacts with the secondary cell wall (SCW)-related cellulose synthase complex. As to expression, accumulates in cells differentiating into tracheary element (TE) which undergo secondary cell wall (SCW) formation.

The protein resides in the cell membrane. The protein localises to the secreted. Its subcellular location is the cell wall. Involved in the secondary cell wall (SCW) formation of vessel elements (e.g. protoxylem and metaxylem), thus promoting tracheary element (TE) differentiation. This chain is Protein TRACHEARY ELEMENT DIFFERENTIATION-RELATED 6, found in Zinnia elegans (Garden zinnia).